A 628-amino-acid chain; its full sequence is Probable potassium transport system protein Kup (628 aa).

11 helical membrane passes run 56 to 76 (ILSLVVWTLTVIVSLKYVLLI), 109 to 129 (LILGVFGTAIFFGDGVITPAI), 141 to 161 (AAPGLHRYVVPVTLVVLTLLF), 174 to 194 (FFGPVTAVWFIVLALLGVVHI), 209 to 229 (ALAFMWQHPGTAFVSLGAVVL), 253 to 273 (WFSLVMPALMINYFGQGAMLL), 295 to 315 (LIVLATLATVIASQALITAAF), 343 to 363 (IYVPFVNWGLYACIVLAVVTF), 372 to 392 (AYGIAVTTDMLITTTMTFFVI), 400 to 420 (WALCVAATGFFFLVDAMFFAA), and 425 to 445 (ILDGGWFPLAIGAAMFTLMMT).

Belongs to the HAK/KUP transporter (TC 2.A.72) family.

It localises to the cell inner membrane. The catalysed reaction is K(+)(in) + H(+)(in) = K(+)(out) + H(+)(out). Its function is as follows. Transport of potassium into the cell. Likely operates as a K(+):H(+) symporter. In Methylibium petroleiphilum (strain ATCC BAA-1232 / LMG 22953 / PM1), this protein is Probable potassium transport system protein Kup.